We begin with the raw amino-acid sequence, 388 residues long: Omega-hydroxy-beta-dihydromenaquinone-9 sulfotransferase Stf3 (388 aa).

Belongs to the Stf3 family.

It carries out the reaction omega-hydroxy-beta-dihydromenaquinone-9 + 3'-phosphoadenylyl sulfate = omega-sulfo-beta-dihydromenaquinone-9 + adenosine 3',5'-bisphosphate + H(+). Its function is as follows. Involved in the biosynthesis of sulfomenaquinone (SMK, initially named S881 on the basis of its mass), which is localized in the outer envelope of M.bovis and negatively regulates its virulence. Catalyzes the transfer of a sulfonate group from 3'-phosphoadenosine-5'-phosphosulfate (PAPS) to omega-hydroxy-beta-dihydromenaquinone-9, generating omega-sulfo-beta-dihydromenaquinone-9 (sulfomenaquinone). The polypeptide is Omega-hydroxy-beta-dihydromenaquinone-9 sulfotransferase Stf3 (Mycobacterium bovis (strain ATCC BAA-935 / AF2122/97)).